Reading from the N-terminus, the 170-residue chain is Group 2 truncated hemoglobin 3-1 (170 aa).

H98 serves as a coordination point for heme b.

It belongs to the truncated hemoglobin family. Group II subfamily. As to quaternary structure, homodimer when ferric.

Hemoglobin-like protein that exhibits an unusual concentration-independent binding of O(2) and CO. Required for general plant development and during nodulation. May promote shoot organogenesis from root explants. This Medicago truncatula (Barrel medic) protein is Group 2 truncated hemoglobin 3-1.